The primary structure comprises 245 residues: 1-(5-phosphoribosyl)-5-[(5-phosphoribosylamino)methylideneamino] imidazole-4-carboxamide isomerase (245 aa).

Catalysis depends on aspartate 7, which acts as the Proton acceptor. Aspartate 129 (proton donor) is an active-site residue.

This sequence belongs to the HisA/HisF family.

The protein localises to the cytoplasm. The enzyme catalyses 1-(5-phospho-beta-D-ribosyl)-5-[(5-phospho-beta-D-ribosylamino)methylideneamino]imidazole-4-carboxamide = 5-[(5-phospho-1-deoxy-D-ribulos-1-ylimino)methylamino]-1-(5-phospho-beta-D-ribosyl)imidazole-4-carboxamide. The protein operates within amino-acid biosynthesis; L-histidine biosynthesis; L-histidine from 5-phospho-alpha-D-ribose 1-diphosphate: step 4/9. The chain is 1-(5-phosphoribosyl)-5-[(5-phosphoribosylamino)methylideneamino] imidazole-4-carboxamide isomerase from Escherichia coli O7:K1 (strain IAI39 / ExPEC).